A 105-amino-acid chain; its full sequence is Small ribosomal subunit protein eS26 (105 aa).

It belongs to the eukaryotic ribosomal protein eS26 family. As to quaternary structure, component of the small ribosomal subunit.

Its subcellular location is the cytoplasm. In Encephalitozoon cuniculi (strain GB-M1) (Microsporidian parasite), this protein is Small ribosomal subunit protein eS26 (RPS26).